Here is a 425-residue protein sequence, read N- to C-terminus: UDP-N-acetylglucosamine 1-carboxyvinyltransferase (425 aa).

31-32 (KN) is a phosphoenolpyruvate binding site. Position 100 (Arg100) interacts with UDP-N-acetyl-alpha-D-glucosamine. Cys124 functions as the Proton donor in the catalytic mechanism. Cys124 carries the post-translational modification 2-(S-cysteinyl)pyruvic acid O-phosphothioketal. Residues 129 to 133 (RPIDQ), 170 to 172 (TVT), Asp311, and Ile333 each bind UDP-N-acetyl-alpha-D-glucosamine.

This sequence belongs to the EPSP synthase family. MurA subfamily.

The protein localises to the cytoplasm. The catalysed reaction is phosphoenolpyruvate + UDP-N-acetyl-alpha-D-glucosamine = UDP-N-acetyl-3-O-(1-carboxyvinyl)-alpha-D-glucosamine + phosphate. It participates in cell wall biogenesis; peptidoglycan biosynthesis. In terms of biological role, cell wall formation. Adds enolpyruvyl to UDP-N-acetylglucosamine. This Aquifex aeolicus (strain VF5) protein is UDP-N-acetylglucosamine 1-carboxyvinyltransferase.